A 110-amino-acid polypeptide reads, in one-letter code: NADH-quinone oxidoreductase subunit K (110 aa).

3 helical membrane-spanning segments follow: residues Val13–Ile33, Ile38–Ile58, and Val70–Val90.

This sequence belongs to the complex I subunit 4L family. In terms of assembly, NDH-1 is composed of 14 different subunits. Subunits NuoA, H, J, K, L, M, N constitute the membrane sector of the complex.

The protein resides in the cell inner membrane. It carries out the reaction a quinone + NADH + 5 H(+)(in) = a quinol + NAD(+) + 4 H(+)(out). NDH-1 shuttles electrons from NADH, via FMN and iron-sulfur (Fe-S) centers, to quinones in the respiratory chain. The immediate electron acceptor for the enzyme in this species is believed to be ubiquinone. Couples the redox reaction to proton translocation (for every two electrons transferred, four hydrogen ions are translocated across the cytoplasmic membrane), and thus conserves the redox energy in a proton gradient. The protein is NADH-quinone oxidoreductase subunit K of Francisella tularensis subsp. tularensis (strain FSC 198).